A 74-amino-acid polypeptide reads, in one-letter code: Antimicrobial peptide ToAp1 (74 aa).

The N-terminal stretch at 1-22 is a signal peptide; it reads MQMKYLIPIFFLVLIVADHCHA. The residue at position 39 (K39) is a Lysine amide. Positions 40-74 are excised as a propeptide; the sequence is GRRKRDITAQIEQYRNIQKREAAELEELLANLPVY.

The protein belongs to the non-disulfide-bridged peptide (NDBP) superfamily. Short antimicrobial peptide (group 4) family. As to expression, expressed by the venom gland.

The protein localises to the secreted. Its function is as follows. Antimicrobial peptide. Is able to kill Mycobacterium abscessus subsp. massiliense in a dose-dependent manner. Has antifungal activity against Candida spp. and one Cryptococcus neoformans strains with MICs values ranging from 12.5 to 200 uM. Also shows an inhibitory activity on C.albicans biofilms at high concentrations. Shows low cytotoxic activity and has weak hemolytic activity on human erythrocytes. Shows anti-inflammatory activities, since it decreases release of pro-inflammatory cytokines, and increases release of anti-inflammatory cytokines. Acts by blocking the Toll-like receptor 4 (TLR4). In addition, decreases the expression of costimulatory molecules such as CD80 and CD86 in LPS-stimulated cells. In vivo, does not induce immune cell migration. Helical wheel projections predict an amphipathic peptide with distinct hydrophobic and hydrophilic faces. The polypeptide is Antimicrobial peptide ToAp1 (Tityus obscurus (Amazonian scorpion)).